The chain runs to 900 residues: MPRTPKRVHQEAKEESAQADQPPKKSASEDVEAFTNKGFKNAIAATKAANAFPQGTARALYLSYPGYARVMEDLTQRVVALIGNVLHSKDIKGDIKKRQPEEQFEMVQECNDVLFERITTNLDIKGGLRRNTQQVVEAQVDVMSSSTSIEPAVASPQTQGTPKAGSWNRTTGTPQRSMVSARLFTAKNIVRPQTQFREPVDNSAQNPFVPRLKEKPNSLKPLALLPEYDDAGNVQSYLHPYEFELLKFQPPEEQFQKQKPVLPALMAETELMVVDTVEKLKQALEELRQAPQIAIDVEHHSYRTFMGITCLVQMSTRSKDYIFDTLILRDDMHILNLVLTDPKKLKILHGADLDIEWLQRDLSLYIVNMFDTHRAAKALNMARLSLAYLLKHYLDLDVDKSLQLADWRMRPLPQQLVDYARQDTHFLIYVYGRMTNDLLQQHAEPGLLGSVYQQSTDVCKKRYNKPHIGPESHLDLVRKTKRSFDNRQLYALRGIFEWRDATARSEDESYGYVLPNHMMLQIAESLPREMQGILACCNPIPPLVRQQLHTLHQIVLKARDQPLVKPILEAHSSTQAALPPSTKDFSSKLYCPHDFSQLEEIRDDLPTLLKRNSTTGKLEVPNKEEVAKVDPTLAAPAMALFEKQSKPTQEEEQRWAHLRKESQTMRMPYKRYLAILPLMVQLKADQLARERSELQKRQLCPAAPTVEQNIKLEAHAIGKEDDDMYSVPLKEQLKRKHPQANVKTDPEQQPTASKRPRKDENSQTKPPVKIEPVEKVQQALGESDDEVVEVPIERQATEPPKPSPAQNNRKQKKNQFQRGFKAKNRGNHPQSSSQQVPQHKGTGNFDYKNVDFRQFKGGAQRARGTEIKQQIRGKNRPNNRNNKQFNKLFTFSNVRKEGKK.

2 disordered regions span residues 1–31 and 147–174; these read MPRT…SEDV and TSIE…TGTP. The segment covering 8 to 28 has biased composition (basic and acidic residues); that stretch reads VHQEAKEESAQADQPPKKSAS. Residues 273-438 enclose the 3'-5' exonuclease domain; sequence VVDTVEKLKQ…YVYGRMTNDL (166 aa). Mg(2+) contacts are provided by aspartate 296, glutamate 298, aspartate 354, and aspartate 423. Residues 485–565 enclose the HRDC domain; the sequence is DNRQLYALRG…LKARDQPLVK (81 aa). The disordered stretch occupies residues 731-900; that stretch reads EQLKRKHPQA…FSNVRKEGKK (170 aa). The segment covering 809 to 826 has biased composition (basic residues); sequence RKQKKNQFQRGFKAKNRG. The span at 878-887 shows a compositional bias: low complexity; sequence NNRNNKQFNK.

Belongs to the exosome component 10/RRP6 family. Component of the RNA exosome complex. Interacts with spn-A/Rad51; the interaction is required for the recruitment of spn-A to the DNA-damage response foci. Interacts with Su(var)3-9, a heterochromatin factor; the interaction promotes association of Rrp6 with a subset of genomic loci. Interacts with Su(var)205, a heterochromatin factor. Interacts with HDAC1, a heterochromatin factor. The cofactor is Mg(2+). In terms of tissue distribution, salivary gland (at protein level).

It is found in the nucleus. It localises to the chromosome. The protein resides in the cytoplasm. Its subcellular location is the cell cortex. The protein localises to the cytoskeleton. It is found in the microtubule organizing center. It localises to the centrosome. The protein resides in the spindle. Its subcellular location is the midbody. In terms of biological role, catalytic component of the RNA exosome complex which has 3'-&gt;5' exoribonuclease activity and participates in a multitude of cellular RNA processing and degradation events. Degrades a large variety of non-coding RNAs that are processed by the exosome, such as pre-rRNAs and some small nucleolar RNAs (snoRNAs). Degrades transcripts derived from different types of heterochromatic repeats, such as subtelomeric minisatellites and simple gagaa repeats. Degrades transcripts derived from transposons and transposon fragments. Degrades chromatin-associated transcripts and contributes to the compaction of heterochromatin. Required for the efficient repair of DNA double-strand breaks via homologous recombination after irradiation. Required for cell proliferation and error-free mitosis. The chain is Exosome complex component 10 homolog from Drosophila melanogaster (Fruit fly).